The sequence spans 236 residues: Probable transmembrane ascorbate ferrireductase 4 (236 aa).

The Cytochrome b561 domain occupies 14-210; that stretch reads FARLSGLVVA…LGCIVITAAI (197 aa). 3 consecutive transmembrane segments (helical) span residues 17-37, 42-62, and 76-96; these read LSGL…PNLG, TLHP…AILI, and VHLW…WTKF. 3 residues coordinate heme b: His44, His77, and His110. The next 3 helical transmembrane spans lie at 112–132, 144–164, and 191–211; these read WMGL…FMSF, TFLP…IATA, and VNGL…AAIL. Residue His149 participates in heme b binding.

In terms of assembly, homodimer. Heme b serves as cofactor.

It is found in the membrane. It carries out the reaction Fe(3+)(out) + L-ascorbate(in) = monodehydro-L-ascorbate radical(in) + Fe(2+)(out) + H(+). Two-heme-containing cytochrome. May catalyze ascorbate-dependent trans-membrane ferric-chelate reduction. The sequence is that of Probable transmembrane ascorbate ferrireductase 4 (CYB561D) from Arabidopsis thaliana (Mouse-ear cress).